A 144-amino-acid polypeptide reads, in one-letter code: Phospholipase A2, membrane associated (144 aa).

The first 20 residues, 1-20, serve as a signal peptide directing secretion; that stretch reads MKTLLLLAVIMIFGLLQAHG. Intrachain disulfides connect C46-C137, C48-C64, C63-C117, C69-C144, C70-C110, C79-C103, and C97-C108. Residues H47, G49, and G51 each coordinate Ca(2+). H67 is a catalytic residue. D68 provides a ligand contact to Ca(2+). Residue D111 is part of the active site.

The protein belongs to the phospholipase A2 family. Ca(2+) is required as a cofactor. In terms of tissue distribution, expressed in various tissues including heart, kidney, liver, lung, pancreas, placenta, skeletal muscle, prostate, ovary, colon and small intestine. Not detected in lymphoid organs and brain. Expressed in platelets (at protein level).

The protein localises to the secreted. Its subcellular location is the cell membrane. The protein resides in the mitochondrion outer membrane. The enzyme catalyses a 1,2-diacyl-sn-glycero-3-phosphoethanolamine + H2O = a 1-acyl-sn-glycero-3-phosphoethanolamine + a fatty acid + H(+). It carries out the reaction 1-hexadecanoyl-2-(9Z-octadecenoyl)-sn-glycero-3-phosphoethanolamine + H2O = 1-hexadecanoyl-sn-glycero-3-phosphoethanolamine + (9Z)-octadecenoate + H(+). It catalyses the reaction 1-hexadecanoyl-2-(9Z,12Z-octadecadienoyl)-sn-glycero-3-phosphoethanolamine + H2O = 1-hexadecanoyl-sn-glycero-3-phosphoethanolamine + (9Z,12Z)-octadecadienoate + H(+). The catalysed reaction is 1-hexadecanoyl-2-(5Z,8Z,11Z,14Z-eicosatetraenoyl)-sn-glycero-3-phosphoethanolamine + H2O = 1-hexadecanoyl-sn-glycero-3-phosphoethanolamine + (5Z,8Z,11Z,14Z)-eicosatetraenoate + H(+). The enzyme catalyses N-hexadecanoyl-1,2-di-(9Z-octadecenoyl)-sn-glycero-3-phosphoethanolamine + H2O = N-hexadecanoyl-1-(9Z-octadecenoyl)-sn-glycero-3-phosphoethanolamine + (9Z)-octadecenoate + H(+). It carries out the reaction 1,2-dihexadecanoyl-sn-glycero-3-phospho-(1'-sn-glycerol) + H2O = 1-hexadecanoyl-sn-glycero-3-phospho-(1'-sn-glycerol) + hexadecanoate + H(+). It catalyses the reaction 1-hexadecanoyl-2-(9Z-octadecenoyl)-sn-glycero-3-phosphoglycerol + H2O = 1-hexadecanoyl-sn-glycero-3-phosphoglycerol + (9Z)-octadecenoate + H(+). The catalysed reaction is 1-hexadecanoyl-2-(9Z-octadecenoyl)-sn-glycero-3-phospho-(1'-sn-glycerol) + H2O = 1-hexadecanoyl-sn-glycero-3-phospho-(1'-sn-glycerol) + (9Z)-octadecenoate + H(+). The enzyme catalyses a 1,2-diacyl-sn-glycero-3-phosphocholine + H2O = a 1-acyl-sn-glycero-3-phosphocholine + a fatty acid + H(+). It carries out the reaction 1,2-dihexadecanoyl-sn-glycero-3-phosphocholine + H2O = 1-hexadecanoyl-sn-glycero-3-phosphocholine + hexadecanoate + H(+). It catalyses the reaction 1-hexadecanoyl-2-(9Z-octadecenoyl)-sn-glycero-3-phosphocholine + H2O = 1-hexadecanoyl-sn-glycero-3-phosphocholine + (9Z)-octadecenoate + H(+). The catalysed reaction is 1-hexadecanoyl-2-(9Z,12Z-octadecadienoyl)-sn-glycero-3-phosphocholine + H2O = (9Z,12Z)-octadecadienoate + 1-hexadecanoyl-sn-glycero-3-phosphocholine + H(+). The enzyme catalyses 1-hexadecanoyl-2-(4Z,7Z,10Z,13Z,16Z,19Z-docosahexaenoyl)-sn-glycero-3-phosphocholine + H2O = (4Z,7Z,10Z,13Z,16Z,19Z)-docosahexaenoate + 1-hexadecanoyl-sn-glycero-3-phosphocholine + H(+). Secretory calcium-dependent phospholipase A2 that primarily targets extracellular phospholipids with implications in host antimicrobial defense, inflammatory response and tissue regeneration. Hydrolyzes the ester bond of the fatty acyl group attached at sn-2 position of phospholipids (phospholipase A2 activity) with preference for phosphatidylethanolamines and phosphatidylglycerols over phosphatidylcholines. Contributes to lipid remodeling of cellular membranes and generation of lipid mediators involved in pathogen clearance. Displays bactericidal activity against Gram-positive bacteria by directly hydrolyzing phospholipids of the bacterial membrane. Upon sterile inflammation, targets membrane phospholipids of extracellular mitochondria released from activated platelets, generating free unsaturated fatty acids such as arachidonate that is used by neighboring leukocytes to synthesize inflammatory eicosanoids such as leukotrienes. Simultaneously, by compromising mitochondrial membrane integrity, promotes the release in circulation of potent damage-associated molecular pattern molecules that activate the innate immune response. Plays a stem cell regulator role in the intestinal crypt. Within intracellular compartment mediates Paneth cell differentiation and its stem cell supporting functions by inhibiting Wnt signaling pathway in intestinal stem cell (ICS). Secreted in the intestinal lumen upon inflammation, acts in an autocrine way and promotes prostaglandin E2 synthesis that stimulates Wnt signaling pathway in ICS cells and tissue regeneration. May play a role in the biosynthesis of N-acyl ethanolamines that regulate energy metabolism and inflammation. Hydrolyzes N-acyl phosphatidylethanolamines to N-acyl lysophosphatidylethanolamines, which are further cleaved by a lysophospholipase D to release N-acyl ethanolamines. Independent of its catalytic activity, acts as a ligand for integrins. Binds to and activates integrins ITGAV:ITGB3, ITGA4:ITGB1 and ITGA5:ITGB1. Binds to a site (site 2) which is distinct from the classical ligand-binding site (site 1) and induces integrin conformational changes and enhanced ligand binding to site 1. Induces cell proliferation in an integrin-dependent manner. The sequence is that of Phospholipase A2, membrane associated (PLA2G2A) from Homo sapiens (Human).